The following is a 378-amino-acid chain: UDP-N-acetylglucosamine 2-epimerase (378 aa).

Histidine 214 is an active-site residue.

Belongs to the UDP-N-acetylglucosamine 2-epimerase family.

It carries out the reaction UDP-N-acetyl-alpha-D-glucosamine = UDP-N-acetyl-alpha-D-mannosamine. The protein operates within bacterial outer membrane biogenesis; LPS O-antigen biosynthesis. The sequence is that of UDP-N-acetylglucosamine 2-epimerase (rfbC) from Salmonella borreze.